Reading from the N-terminus, the 482-residue chain is NAD(+) hydrolase ThsA (482 aa).

A Deacetylase sirtuin-type domain is found at glutamate 3–lysine 281. NAD(+) contacts are provided by aspartate 112 and histidine 150. Histidine 150 (proton acceptor) is an active-site residue. The segment at asparagine 282–isoleucine 482 is SLOG (STALD) domain. Positions 287, 288, 324, 355, 373, 390, 407, and 411 each coordinate 3'cADPR.

The protein belongs to the soluble Thoeris ThsA family. In terms of assembly, homotetramer in solution.

It catalyses the reaction NAD(+) + H2O = ADP-D-ribose + nicotinamide + H(+). With respect to regulation, in vivo probably activated by a cyclic ADP-D-ribose generated by ThsB (might be 3'cADPR). NAD(+) hydrolyzing component (NADase) of the Thoeris antiviral defense system, composed of ThsA and ThsB (maybe J591_1492). As purified, has NADase activity that is not activated by any tested cADPR isomers; binds 3'cADPR better than 2'cADPR. It was suggested the purified protein is already in a fully active state. Upon activation binds and hydrolyzes NAD(+), leading to cell death and inhibition of phage replication. In Acinetobacter baumannii (strain 532279), this protein is NAD(+) hydrolase ThsA.